The chain runs to 55 residues: Large ribosomal subunit protein bL33 (55 aa).

Belongs to the bacterial ribosomal protein bL33 family.

This chain is Large ribosomal subunit protein bL33, found in Methylorubrum extorquens (strain CM4 / NCIMB 13688) (Methylobacterium extorquens).